The following is a 970-amino-acid chain: Serine/threonine-protein kinase PLK4 (970 aa).

Positions 12 to 265 (FKVGNLLGKG…LSSVLDHPFM (254 aa)) constitute a Protein kinase domain. ATP is bound by residues 18-26 (LGKGSFAGV) and lysine 41. N6-acetyllysine is present on residues lysine 45 and lysine 46. Catalysis depends on aspartate 136, which acts as the Proton acceptor. Disordered regions lie at residues 323–458 (TVFP…NHLC) and 497–538 (SISP…HSVK). Polar residues predominate over residues 328-356 (NKSSTDFSSSGDGNSFYTQWGNQETSNSG). Residues 360-369 (VIQDAEERPH) are compositionally biased toward basic and acidic residues. Residues 379–393 (SDRSGTSNSQSQAKT) are compositionally biased toward polar residues. Serine 401 carries the post-translational modification Phosphoserine. Residues 438 to 454 (SSSSGSFERPDNNQALS) show a composition bias toward polar residues. Over residues 504–515 (FQGHPDLQKDTS) the composition is skewed to basic and acidic residues. Positions 586–699 (TLRSITSPLV…SRFVQLVRSK (114 aa)) constitute a Cryptic POLO box 1 (CPB1) domain. Serine 665 is modified (phosphoserine). The Cryptic POLO box 2 (CPB2) domain occupies 700–813 (SPKITYFTRY…GRKPGSTSSP (114 aa)). Positions 808–828 (GSTSSPKALSPPPSVDSNYPT) are disordered. Residue serine 817 is modified to Phosphoserine. In terms of domain architecture, POLO box spans 886 to 964 (QLLKSVFVKN…LSSILLMFSN (79 aa)).

The protein belongs to the protein kinase superfamily. Ser/Thr protein kinase family. CDC5/Polo subfamily. As to quaternary structure, homodimer. Interacts with CEP152 (via N-terminus). Interacts with CEP78; this interaction may be important for proper PLK4 localization to the centriole and PLK4-induced overduplication of centrioles. Interacts with CEP131. Interacts simultaneously with TENT5C and CEP192. Interacts with TENT5C; this interaction leads to the TENT5C recruitment in the centrosome. Interacts with CEP85; this interaction may be important in cell migration and centriole assembly. Acetylation by KAT2A and KAT2B impairs kinase activity by shifting the kinase to an inactive conformation. In terms of processing, ubiquitinated; leading to its degradation by the proteasome. Deubiquitinated by USP54; leading to PLK4 stabilization. Post-translationally, tyrosine-phosphorylated by TEC.

The protein localises to the cytoplasm. It localises to the cytoskeleton. The protein resides in the microtubule organizing center. It is found in the centrosome. Its subcellular location is the centriole. The protein localises to the nucleus. It localises to the nucleolus. The protein resides in the cleavage furrow. The enzyme catalyses L-seryl-[protein] + ATP = O-phospho-L-seryl-[protein] + ADP + H(+). It catalyses the reaction L-threonyl-[protein] + ATP = O-phospho-L-threonyl-[protein] + ADP + H(+). Functionally, serine/threonine-protein kinase that plays a central role in centriole duplication. Able to trigger procentriole formation on the surface of the parental centriole cylinder, leading to the recruitment of centriole biogenesis proteins such as SASS6, CPAP, CCP110, CEP135 and gamma-tubulin. When overexpressed, it is able to induce centrosome amplification through the simultaneous generation of multiple procentrioles adjoining each parental centriole during S phase. Phosphorylates 'Ser-151' of FBXW5 during the G1/S transition, leading to inhibit FBXW5 ability to ubiquitinate SASS6. Its central role in centriole replication suggests a possible role in tumorigenesis, centrosome aberrations being frequently observed in tumors. Also involved in deuterosome-mediated centriole amplification in multiciliated that can generate more than 100 centrioles. Also involved in trophoblast differentiation by phosphorylating HAND1, leading to disrupt the interaction between HAND1 and MDFIC and activate HAND1. Phosphorylates CDC25C and CHEK2. Required for the recruitment of STIL to the centriole and for STIL-mediated centriole amplification. Phosphorylates CEP131 at 'Ser-78' and PCM1 at 'Ser-372' which is essential for proper organization and integrity of centriolar satellites. In Homo sapiens (Human), this protein is Serine/threonine-protein kinase PLK4.